The chain runs to 419 residues: Acyl-coenzyme A thioesterase 1 (419 aa).

Residues Ser232, Asp324, and His358 each act as charge relay system in the active site. Position 416 is a phosphoserine (Ser416).

Belongs to the C/M/P thioester hydrolase family. As to quaternary structure, monomer. Expressed in heart, kidney, brown adipose tissue, white adipose tissue, adrenal gland and muscle.

It localises to the cytoplasm. The protein localises to the cytosol. The catalysed reaction is hexadecanoyl-CoA + H2O = hexadecanoate + CoA + H(+). It carries out the reaction decanoyl-CoA + H2O = decanoate + CoA + H(+). The enzyme catalyses dodecanoyl-CoA + H2O = dodecanoate + CoA + H(+). It catalyses the reaction tetradecanoyl-CoA + H2O = tetradecanoate + CoA + H(+). The catalysed reaction is octadecanoyl-CoA + H2O = octadecanoate + CoA + H(+). It carries out the reaction eicosanoyl-CoA + H2O = eicosanoate + CoA + H(+). The enzyme catalyses (9Z)-octadecenoyl-CoA + H2O = (9Z)-octadecenoate + CoA + H(+). It catalyses the reaction (9Z)-hexadecenoyl-CoA + H2O = (9Z)-hexadecenoate + CoA + H(+). The catalysed reaction is (9E)-octadecenoyl-CoA + H2O = (9E)-octadecenoate + CoA + H(+). The protein operates within lipid metabolism; fatty acid metabolism. In terms of biological role, catalyzes the hydrolysis of acyl-CoAs into free fatty acids and coenzyme A (CoASH), regulating their respective intracellular levels. More active towards saturated and unsaturated long chain fatty acyl-CoAs (C12-C20). The sequence is that of Acyl-coenzyme A thioesterase 1 (Acot1) from Mus musculus (Mouse).